A 575-amino-acid chain; its full sequence is Adenine deaminase (575 aa).

This sequence belongs to the metallo-dependent hydrolases superfamily. Adenine deaminase family. Mn(2+) serves as cofactor.

It carries out the reaction adenine + H2O + H(+) = hypoxanthine + NH4(+). This chain is Adenine deaminase, found in Nitratidesulfovibrio vulgaris (strain DP4) (Desulfovibrio vulgaris).